The primary structure comprises 269 residues: UPF0162 protein BUsg_167 (269 aa).

The protein belongs to the UPF0162 family.

The sequence is that of UPF0162 protein BUsg_167 from Buchnera aphidicola subsp. Schizaphis graminum (strain Sg).